Reading from the N-terminus, the 553-residue chain is Protein spartin (553 aa).

The region spanning 15 to 96 is the MIT domain; the sequence is IRTAYKAAMT…ETELRYRLKV (82 aa). The segment at 105 to 130 is disordered; sequence DDSAVEATEESRAEMDTKRPPLLAEN. Positions 113–123 are enriched in basic and acidic residues; that stretch reads EESRAEMDTKR. In terms of domain architecture, Senescence spans 325–509; the sequence is IVSAADFIAS…SQNVNYITPK (185 aa).

Interacts with Eps-15 (via C-terminal region); the interaction is required for spartin localization to the NMJ presynaptic membrane. Expressed in larval brain, ventral nerve cord and neuropil (at protein level).

The protein resides in the presynaptic cell membrane. It localises to the early endosome. The protein localises to the lipid droplet. In terms of biological role, during postembryonic development, functions with endocytic adapter Eps-15 in neurons to restrain synaptic growth, by inhibiting BMP signaling, and to control synaptic endocytosis. Required presynaptically for neuromuscular junction (NMJ) neurotransmission. Inhibits neuronal BMP signaling by promoting endocytic internalization and subsequent endosomal trafficking of the BMP receptor wit. In this way, regulates the Fmr1 translational regulator controlling Futsch expression to modulate neuronal microtubule stability, which controls both synaptogenesis and neuronal survival. The sequence is that of Protein spartin from Drosophila melanogaster (Fruit fly).